Consider the following 424-residue polypeptide: Hemagglutinin-esterase (424 aa).

The signal sequence occupies residues 1–16 (MFLLPRFVLVSCIIGS). The esterase domain 1 stretch occupies residues 7–127 (FVLVSCIIGS…SNDIWMQNKG (121 aa)). Residues 17 to 392 (LGFENPPTNV…PICVYDPLPL (376 aa)) are Virion surface-facing. Serine 40 serves as the catalytic Nucleophile. The cysteines at positions 44 and 65 are disulfide-linked. 5 N-linked (GlcNAc...) asparagine; by host glycosylation sites follow: asparagine 54, asparagine 89, asparagine 153, asparagine 236, and asparagine 301. Disulfide bonds link cysteine 113–cysteine 162, cysteine 197–cysteine 276, and cysteine 205–cysteine 249. A receptor binding region spans residues 128–266 (LFYTQVYKNM…GNYLAISNEL (139 aa)). The tract at residues 267–379 (LLTVPTKAIC…RCPTAADINT (113 aa)) is esterase domain 2. Residues cysteine 307 and cysteine 312 are joined by a disulfide bond. Residue asparagine 316 is glycosylated (N-linked (GlcNAc...) asparagine; by host). Active-site charge relay system residues include aspartate 326 and histidine 329. Cysteine 347 and cysteine 371 are oxidised to a cystine. Asparagine 358 carries N-linked (GlcNAc...) asparagine; by host glycosylation. Residues 393 to 413 (ILLGILLGVAVIIIVVLLLYF) traverse the membrane as a helical segment. The Intravirion segment spans residues 414–424 (MVDNGTRLHDA). Asparagine 417 is a glycosylation site (N-linked (GlcNAc...) asparagine; by host).

It belongs to the influenza type C/coronaviruses hemagglutinin-esterase family. In terms of assembly, homodimer; disulfide-linked. Forms a complex with the M protein in the pre-Golgi. Associates then with S-M complex to form a ternary complex S-M-HE. In terms of processing, N-glycosylated in the host RER.

The protein localises to the virion membrane. Its subcellular location is the host cell membrane. The enzyme catalyses N-acetyl-9-O-acetylneuraminate + H2O = N-acetylneuraminate + acetate + H(+). It catalyses the reaction N-acetyl-4-O-acetylneuraminate + H2O = N-acetylneuraminate + acetate + H(+). Functionally, structural protein that makes short spikes at the surface of the virus. Contains receptor binding and receptor-destroying activities. Mediates de-O-acetylation of N-acetyl-4-O-acetylneuraminic acid, which is probably the receptor determinant recognized by the virus on the surface of erythrocytes and susceptible cells. This receptor-destroying activity is important for virus release as it probably helps preventing self-aggregation and ensures the efficient spread of the progeny virus from cell to cell. May serve as a secondary viral attachment protein for initiating infection, the spike protein being the major one. May become a target for both the humoral and the cellular branches of the immune system. In Bovine coronavirus (strain G95) (BCoV), this protein is Hemagglutinin-esterase.